Consider the following 102-residue polypeptide: Small ribosomal subunit protein uS14 (102 aa).

Belongs to the universal ribosomal protein uS14 family. As to quaternary structure, part of the 30S ribosomal subunit. Contacts proteins S3 and S10.

Functionally, binds 16S rRNA, required for the assembly of 30S particles and may also be responsible for determining the conformation of the 16S rRNA at the A site. The chain is Small ribosomal subunit protein uS14 from Wolbachia pipientis wMel.